The primary structure comprises 374 residues: Chaperone protein DnaJ (374 aa).

A J domain is found at 4–68 (DYYEILGVSR…EMKARFDRFG (65 aa)). The CR-type zinc finger occupies 132 to 214 (GGDKELTIKH…CGGRGQKEAT (83 aa)). Positions 145, 148, 162, 165, 188, 191, 202, and 205 each coordinate Zn(2+). 4 CXXCXGXG motif repeats span residues 145–152 (CGTCNGSG), 162–169 (CSTCGGTG), 188–195 (CPSCNGSG), and 202–209 (CVDCGGRG).

Belongs to the DnaJ family. In terms of assembly, homodimer. The cofactor is Zn(2+).

The protein resides in the cytoplasm. In terms of biological role, participates actively in the response to hyperosmotic and heat shock by preventing the aggregation of stress-denatured proteins and by disaggregating proteins, also in an autonomous, DnaK-independent fashion. Unfolded proteins bind initially to DnaJ; upon interaction with the DnaJ-bound protein, DnaK hydrolyzes its bound ATP, resulting in the formation of a stable complex. GrpE releases ADP from DnaK; ATP binding to DnaK triggers the release of the substrate protein, thus completing the reaction cycle. Several rounds of ATP-dependent interactions between DnaJ, DnaK and GrpE are required for fully efficient folding. Also involved, together with DnaK and GrpE, in the DNA replication of plasmids through activation of initiation proteins. The protein is Chaperone protein DnaJ of Trichodesmium erythraeum (strain IMS101).